The chain runs to 916 residues: Nitrate reductase [NADH] 1 (916 aa).

Positions 1-77 are disordered; the sequence is MAASVQPRQF…DDEEEEQEDW (77 aa). The segment covering 66–76 has biased composition (acidic residues); sequence GSDDEEEEQED. Mo-molybdopterin is bound at residue cysteine 192. Positions 541–616 constitute a Cytochrome b5 heme-binding domain; that stretch reads GKQFTMSEVR…LDTYRIGELI (76 aa). The heme site is built by histidine 576 and histidine 599. An FAD-binding FR-type domain is found at 656 to 768; sequence RDKVPCQLVD…KGPLGHVEYT (113 aa). FAD contacts are provided by residues 708 to 711, 725 to 729, phenylalanine 730, phenylalanine 737, 742 to 744, serine 792, and threonine 795; these read RAYT, LIKVY, and LMT.

It belongs to the nitrate reductase family. As to quaternary structure, homodimer. Requires FAD as cofactor. Heme is required as a cofactor. Mo-molybdopterin serves as cofactor.

It catalyses the reaction nitrite + NAD(+) + H2O = nitrate + NADH + H(+). Functionally, nitrate reductase is a key enzyme involved in the first step of nitrate assimilation in plants, fungi and bacteria. This Oryza sativa subsp. japonica (Rice) protein is Nitrate reductase [NADH] 1 (NIA1).